The sequence spans 536 residues: Quinate permease (536 aa).

The Cytoplasmic portion of the chain corresponds to 1–26 (MTLLALKEDRPTPKAVYNWRVYTCAA). The chain crosses the membrane as a helical span at residues 27–47 (IASFASCMIGYDSAFIGTTLA). Residues 48-74 (LPSFKKEFDFASYTPGALALLQSNIVS) are Extracellular-facing. The chain crosses the membrane as a helical span at residues 75–95 (VYQAGAFFGSLFAFATSYFLG). Residues 96–98 (RRK) are Cytoplasmic-facing. A helical transmembrane segment spans residues 99–119 (SLIAFSVVFIIGAAIMLAADG). Topologically, residues 120–131 (QGRGIAPIIAGR) are extracellular. A helical transmembrane segment spans residues 132 to 152 (VLAGIGVGGASNMVPIYISEL). The Cytoplasmic portion of the chain corresponds to 153–160 (APPAVRGR). The helical transmembrane segment at 161 to 181 (LVGIYELGWQIGGLVGFWINY) threads the bilayer. The Extracellular portion of the chain corresponds to 182–195 (GVNTTMAPTRSQWL). Asn184 is a glycosylation site (N-linked (GlcNAc...) asparagine). The chain crosses the membrane as a helical span at residues 196 to 216 (IPFAVQLIPAGLLFLGSFWIP). Residues 217–285 (ESPRWLFANG…SLKQRKVQWR (69 aa)) are Cytoplasmic-facing. A helical transmembrane segment spans residues 286–306 (FFLGGMLFLWQNGSGINAINY). Residues 307-327 (YSPTVFRSIGITGTNTGFLTT) lie on the Extracellular side of the membrane. The helical transmembrane segment at 328-349 (GIFGVVKMVLTIVWLLWLVDLV) threads the bilayer. The Cytoplasmic segment spans residues 350–352 (GRR). A helical membrane pass occupies residues 353–373 (RMLFIGATGGSLCMWFIGAYI). Residues 374-389 (KIAGPGSTKAEDAKLT) lie on the Extracellular side of the membrane. Residues 390-410 (SGGIAAIFFFYLWTAFYTPSW) form a helical membrane-spanning segment. Residues 411-435 (NGTPWVINSEMFDQNTRSLGQASAA) lie on the Cytoplasmic side of the membrane. Residues 436–456 (ANNWFWNFIISRFTPQMFIKM) form a helical membrane-spanning segment. At 457–458 (EY) the chain is on the extracellular side. A helical membrane pass occupies residues 459–479 (GVYFFFASLMLLSIVFIYFFI). Residues 480–536 (PETKSIPLEAMDRLFEIKPVHNANKILMAELNFDRNPEREESSLDEKDRVTQTENAV) lie on the Cytoplasmic side of the membrane. Residues 516–530 (PEREESSLDEKDRVT) show a composition bias toward basic and acidic residues. The disordered stretch occupies residues 516-536 (PEREESSLDEKDRVTQTENAV).

This sequence belongs to the major facilitator superfamily. Sugar transporter (TC 2.A.1.1) family.

The protein localises to the membrane. This chain is Quinate permease (qa-y), found in Neurospora terricola.